Reading from the N-terminus, the 364-residue chain is Peroxisomal membrane protein PEX16 (364 aa).

Position 200 is a phosphoserine (serine 200).

It belongs to the peroxin-16 family.

The protein localises to the peroxisome membrane. Its function is as follows. Involved in the biogenesis of peroxisomes. The protein is Peroxisomal membrane protein PEX16 (pex16) of Schizosaccharomyces pombe (strain 972 / ATCC 24843) (Fission yeast).